We begin with the raw amino-acid sequence, 50 residues long: Sperm protamine P1 (50 aa).

The protein belongs to the protamine P1 family. As to quaternary structure, cross-linked by interchain disulfide bonds around the DNA-helix. As to expression, testis.

It is found in the nucleus. Its subcellular location is the chromosome. In terms of biological role, protamines substitute for histones in the chromatin of sperm during the haploid phase of spermatogenesis. They compact sperm DNA into a highly condensed, stable and inactive complex. The protein is Sperm protamine P1 (PRM1) of Pan paniscus (Pygmy chimpanzee).